The sequence spans 573 residues: Cytosolic 5'-nucleotidase 1B (573 aa).

A compositionally biased stretch (basic residues) spans 1–11 (MSQTSLKHKKK). Disordered stretches follow at residues 1–200 (MSQT…PPTE) and 218–238 (EPEY…EEDE). Positions 12 to 35 (NEPGMRYSKESLDAEKRKDSDKTG) are enriched in basic and acidic residues. Residues 60-73 (NQWSRTSRSPSTGA) show a composition bias toward polar residues. Positions 93-105 (SSTTSRTSSASPS) are enriched in low complexity. The span at 115–136 (TSEKSSIQQTPQNRPITQLESQ) shows a compositional bias: polar residues. Composition is skewed to basic and acidic residues over residues 161-174 (WAHR…DLQL) and 182-194 (DSRE…REYP). Residue D428 is the Nucleophile of the active site.

It belongs to the 5'-nucleotidase type 3 family. Mg(2+) is required as a cofactor. As to expression, expressed at highest levels in testis. Also expressed in brain, skeletal muscle, kidney and heart.

It localises to the cytoplasm. The enzyme catalyses a ribonucleoside 5'-phosphate + H2O = a ribonucleoside + phosphate. It catalyses the reaction AMP + H2O = adenosine + phosphate. Its activity is regulated as follows. Activated by ADP. Functionally, catalyzes the hydrolysis of nucleotide monophosphates, releasing inorganic phosphate and the corresponding nucleoside, AMP is the major substrate. The polypeptide is Cytosolic 5'-nucleotidase 1B (Nt5c1b) (Mus musculus (Mouse)).